The following is a 206-amino-acid chain: Large ribosomal subunit protein uL4 (206 aa).

Belongs to the universal ribosomal protein uL4 family. Part of the 50S ribosomal subunit.

Its function is as follows. One of the primary rRNA binding proteins, this protein initially binds near the 5'-end of the 23S rRNA. It is important during the early stages of 50S assembly. It makes multiple contacts with different domains of the 23S rRNA in the assembled 50S subunit and ribosome. Functionally, forms part of the polypeptide exit tunnel. This Bradyrhizobium sp. (strain ORS 278) protein is Large ribosomal subunit protein uL4.